A 219-amino-acid chain; its full sequence is MDREAFVQTLTACRLCPRLVAWREEVVGRKRAFRGEPYWARPVPGFGDPEARILLFGLAPGAHGSNRTGRPFTGDASGAFLYPLLHEAGLSSKPESLPGDDLRLYGVYLTAAVRCAPPKNKPTPEELRACARWTEVELGLLPEVRVYVALGRIALEALLAHFGLRKSAHPFRHGAHYPLPGGRHLLASYHVSRQNTQTGRLTREMFLEVLMEAKRLAGL.

Cys-13, Cys-16, Cys-115, and Cys-130 together coordinate [4Fe-4S] cluster.

Belongs to the uracil-DNA glycosylase (UDG) superfamily. Type 5 (UDGb) family.

In terms of biological role, DNA glycosylase with broad substrate specificity. Can remove uracil from double-stranded DNA containing either a U/G, U/A, U/C or U/T base pair. Can also excise hypoxanthine from double-stranded DNA containing G/I, T/I, and A/I base pairs, xanthine from both double-stranded and single stranded DNA, thymine from G/T mismatched DNA, 5'-hydroxymethyluracil and 5'-fluorouracil. The chain is Type-5 uracil-DNA glycosylase from Thermus thermophilus (strain ATCC 27634 / DSM 579 / HB8).